The primary structure comprises 388 residues: Tryptophan synthase beta chain (388 aa).

Lys86 carries the post-translational modification N6-(pyridoxal phosphate)lysine.

The protein belongs to the TrpB family. In terms of assembly, tetramer of two alpha and two beta chains. Pyridoxal 5'-phosphate serves as cofactor.

It carries out the reaction (1S,2R)-1-C-(indol-3-yl)glycerol 3-phosphate + L-serine = D-glyceraldehyde 3-phosphate + L-tryptophan + H2O. The protein operates within amino-acid biosynthesis; L-tryptophan biosynthesis; L-tryptophan from chorismate: step 5/5. The beta subunit is responsible for the synthesis of L-tryptophan from indole and L-serine. This is Tryptophan synthase beta chain (trpB) from Buchnera aphidicola subsp. Acyrthosiphon pisum (strain APS) (Acyrthosiphon pisum symbiotic bacterium).